A 467-amino-acid chain; its full sequence is Siroheme synthase 2 (467 aa).

A precorrin-2 dehydrogenase /sirohydrochlorin ferrochelatase region spans residues 1-204 (MDYLPIFCQL…NDVALAERQI (204 aa)). NAD(+)-binding positions include 22 to 23 (EI) and 43 to 44 (CS). Ser-128 is modified (phosphoserine). Residues 216-467 (GEVVLVGAGP…EPSQPLAQMA (252 aa)) form a uroporphyrinogen-III C-methyltransferase region. Pro-225 serves as a coordination point for S-adenosyl-L-methionine. The active-site Proton acceptor is the Asp-248. Residue Lys-270 is the Proton donor of the active site. S-adenosyl-L-methionine-binding positions include 301 to 303 (GGD), Ile-306, 331 to 332 (TA), Met-382, and Gly-411.

It in the N-terminal section; belongs to the precorrin-2 dehydrogenase / sirohydrochlorin ferrochelatase family. In the C-terminal section; belongs to the precorrin methyltransferase family.

It carries out the reaction uroporphyrinogen III + 2 S-adenosyl-L-methionine = precorrin-2 + 2 S-adenosyl-L-homocysteine + H(+). The enzyme catalyses precorrin-2 + NAD(+) = sirohydrochlorin + NADH + 2 H(+). The catalysed reaction is siroheme + 2 H(+) = sirohydrochlorin + Fe(2+). Its pathway is cofactor biosynthesis; adenosylcobalamin biosynthesis; precorrin-2 from uroporphyrinogen III: step 1/1. The protein operates within cofactor biosynthesis; adenosylcobalamin biosynthesis; sirohydrochlorin from precorrin-2: step 1/1. It participates in porphyrin-containing compound metabolism; siroheme biosynthesis; precorrin-2 from uroporphyrinogen III: step 1/1. It functions in the pathway porphyrin-containing compound metabolism; siroheme biosynthesis; siroheme from sirohydrochlorin: step 1/1. Its pathway is porphyrin-containing compound metabolism; siroheme biosynthesis; sirohydrochlorin from precorrin-2: step 1/1. Its function is as follows. Multifunctional enzyme that catalyzes the SAM-dependent methylations of uroporphyrinogen III at position C-2 and C-7 to form precorrin-2 via precorrin-1. Then it catalyzes the NAD-dependent ring dehydrogenation of precorrin-2 to yield sirohydrochlorin. Finally, it catalyzes the ferrochelation of sirohydrochlorin to yield siroheme. In Serratia proteamaculans (strain 568), this protein is Siroheme synthase 2.